A 125-amino-acid polypeptide reads, in one-letter code: Small ribosomal subunit protein mS41 (125 aa).

The N-terminal 23 residues, Met1 to Lys23, are a transit peptide targeting the mitochondrion.

Belongs to the mitochondrion-specific ribosomal protein mS41 family.

The protein localises to the mitochondrion. In terms of biological role, involved in telomere length regulation. The polypeptide is Small ribosomal subunit protein mS41 (FYV4) (Kluyveromyces lactis (strain ATCC 8585 / CBS 2359 / DSM 70799 / NBRC 1267 / NRRL Y-1140 / WM37) (Yeast)).